Consider the following 523-residue polypeptide: L-tyrosine:2-oxoglutarate aminotransferase ucdG (523 aa).

Belongs to the class-I pyridoxal-phosphate-dependent aminotransferase family. As to quaternary structure, homodimer. Requires pyridoxal 5'-phosphate as cofactor.

Its subcellular location is the cytoplasm. The catalysed reaction is L-tyrosine + 2-oxoglutarate = 3-(4-hydroxyphenyl)pyruvate + L-glutamate. The protein operates within secondary metabolite biosynthesis. Nonribosomal peptide synthetase that mediates the biosynthesis of usterphenyllins and uscandidusins, p-terphenyl derivatives. Within the pathway, ucdG is probably involved in the conversion of L-tyrosine into 4-hydroxyphenylpyruvate (HPPA) as a precursor for the usterphenyllin and uscandidusin biosynthesis. UcdE further prenylates position C-14 of ring C of usterphenyllin B to form usterphenyllin A. The pathway begin with the biosynthesis of 4-hydroxyphenylpyruvate (HPPA) from L-tyrosine, possibly by the aminotransferase ucdG. The nonribosomal peptide synthetase ucdA then condenses two HPPA units to produce atromentin. The key step in this pathway is the reduction and dehydration of atromentin to form a terphenyl triol intermediate, performed by the NAD-dependent dehydrogenase ucdB. Further O-methylation by the methyltransferase ucdC forms terphenyllin carrying two methoxy moieties at C-9 and C-12, and subsequent dihydroxylation at C-3 of ring A and C-15 of ring C by the flavin-dependent oxygenase ucdD leads to 3,15-dihydroxyterphenyllin. Prenylation by ucdE at position C-5 of ring A forms usterphenyllin B, and is followed by a second prenylation at position C-14 of ring C to form usterphenyllin A. The following furan ring formation that leads to uscandidusins A and B was proven to be an unexpected spontaneous non-enzymatic reaction. This is L-tyrosine:2-oxoglutarate aminotransferase ucdG from Aspergillus ustus.